Consider the following 460-residue polypeptide: Nuclear distribution protein PAC1-1 (460 aa).

One can recognise a LisH domain in the interval 9 to 41; sequence QADELHRALIAYLTAANLPNTAAALREELNLGE. Residues 74–96 are a coiled coil; that stretch reads LVTQIMDLESRNHILQSELDNAT. A compositionally biased stretch (polar residues) spans 90 to 100; it reads SELDNATPTSR. The segment at 90–115 is disordered; it reads SELDNATPTSRQNKDPVAWLPRAPPR. WD repeat units lie at residues 120 to 161, 163 to 203, 207 to 247, 250 to 289, 294 to 354, 355 to 394, 399 to 439, and 441 to 460; these read SHRD…RTIK, HTKA…KNIR, GHDH…CVKT, GHAEWVRDVCPSFDGKYILSTSDDYTSRLWDVTVTNPEPR, GHEH…KTLA, GHDNWVRGLVFHPGGKYLLSVSDDKTLRCWDLTQEGKCVK, AHGH…VTPD, and QIRCVIATGSVDLNVRIFAN.

It belongs to the WD repeat LIS1/nudF family. As to quaternary structure, self-associates. Interacts with NDL1 and dynein.

The protein localises to the cytoplasm. It localises to the cytoskeleton. The protein resides in the spindle pole. Functionally, positively regulates the activity of the minus-end directed microtubule motor protein dynein. May enhance dynein-mediated microtubule sliding by targeting dynein to the microtubule plus end. Required for nuclear migration during vegetative growth as well as development. Required for retrograde early endosome (EE) transport from the hyphal tip. Required for localization of dynein to the mitotic spindle poles. Recruits additional proteins to the dynein complex at SPBs. In Sordaria macrospora (strain ATCC MYA-333 / DSM 997 / K(L3346) / K-hell), this protein is Nuclear distribution protein PAC1-1.